A 234-amino-acid polypeptide reads, in one-letter code: Phosphoglycolate phosphatase (234 aa).

Catalysis depends on aspartate 15, which acts as the Nucleophile. 3 residues coordinate Mg(2+): aspartate 15, aspartate 17, and aspartate 177.

The protein belongs to the HAD-like hydrolase superfamily. CbbY/CbbZ/Gph/YieH family. As to quaternary structure, monomer. Mg(2+) serves as cofactor. The cofactor is chloride.

The catalysed reaction is 2-phosphoglycolate + H2O = glycolate + phosphate. It participates in organic acid metabolism; glycolate biosynthesis; glycolate from 2-phosphoglycolate: step 1/1. Specifically catalyzes the dephosphorylation of 2-phosphoglycolate. Is involved in the dissimilation of the intracellular 2-phosphoglycolate formed during the DNA repair of 3'-phosphoglycolate ends, a major class of DNA lesions induced by oxidative stress. This is Phosphoglycolate phosphatase from Photorhabdus laumondii subsp. laumondii (strain DSM 15139 / CIP 105565 / TT01) (Photorhabdus luminescens subsp. laumondii).